A 602-amino-acid chain; its full sequence is Sodium-independent sulfate anion transporter (602 aa).

Topologically, residues 1–47 are extracellular; the sequence is MSPPMSPMKPPKGFAPMSCCWSTETMQKWLPFLGWLPDYTWYALKMD. A helical membrane pass occupies residues 48 to 68; that stretch reads FIAGISVGLTVIPQALAYAEV. A topological domain (cytoplasmic) is located at residue Ala69. A helical membrane pass occupies residues 70–90; the sequence is GLPPQYGLYSAFMGCFVYFFL. Residues 91 to 115 are Extracellular-facing; the sequence is GTSRDVTLGPTAIMSLLVSFYTFHE. A helical transmembrane segment spans residues 116–136; it reads PAYAVLLAFLTGCIQLGMGFL. The Cytoplasmic portion of the chain corresponds to 137-143; sequence RLGLLLD. A helical membrane pass occupies residues 144–164; it reads FISCPVIKGFTSAAAIIIGFG. The Extracellular portion of the chain corresponds to 165–193; sequence QIKNLLGLQHIPRQFFLQVYYTFHNIGET. A helical membrane pass occupies residues 194–214; the sequence is RVGDAVLGLVCMVLLLVLKLM. Residues 215–246 lie on the Cytoplasmic side of the membrane; sequence RDHVPPVHPEMPTGVRLSHGLVWTATTARNAL. The helical transmembrane segment at 247 to 267 threads the bilayer; it reads VVSFAALVAYSFQVTGYQPFV. Residues 268–300 are Extracellular-facing; the sequence is LTGKTPEGLPDAHIPPFSVTTANGTISFTEMVQ. The chain crosses the membrane as a helical span at residues 301-321; it reads GMGAGLVVVPLMGLLESIAVA. Over 322–337 the chain is Cytoplasmic; that stretch reads KSFASQNNYRINSNQE. A helical transmembrane segment spans residues 338–358; it reads LLALGFTNILGSLFSSYPVTG. The Extracellular portion of the chain corresponds to 359-370; it reads SFGRTAVNAQSG. The helical transmembrane segment at 371–391 threads the bilayer; the sequence is VCTPAGGLMTGALVLLSLDYL. Topologically, residues 392 to 394 are cytoplasmic; the sequence is TSL. The chain crosses the membrane as a helical span at residues 395–415; sequence FYYIPKSALAAVIIMAVVPLF. Residues 416 to 438 lie on the Extracellular side of the membrane; the sequence is DTKIVKTLWRVKRLDLLPLCVTF. Residues 439 to 459 traverse the membrane as a helical segment; it reads LLCFWEVQYGILAGTLVSVLI. At 460–602 the chain is on the cytoplasmic side; the sequence is LLHSVARPKI…PEHKIALLKA (143 aa). Residues 466 to 580 form the STAS domain; that stretch reads RPKIQVSEGP…EAEKYLKQEP (115 aa).

Belongs to the SLC26A/SulP transporter (TC 2.A.53) family.

The protein resides in the cell membrane. It localises to the lysosome membrane. The protein localises to the apical cell membrane. Its subcellular location is the basolateral cell membrane. The enzyme catalyses hydrogencarbonate(in) + chloride(out) = hydrogencarbonate(out) + chloride(in). The catalysed reaction is sulfate(in) + H(+)(in) = sulfate(out) + H(+)(out). It carries out the reaction oxalate(in) + chloride(out) = oxalate(out) + chloride(in). Sodium-independent anion exchanger mediating bicarbonate, chloride, sulfate and oxalate transport. Exhibits sodium-independent sulfate anion transporter activity that may cooperate with SLC26A2 to mediate DIDS-sensitive sulfate uptake into high endothelial venules endothelial cells (HEVEC). In the kidney, mediates chloride-bicarbonate exchange, facilitating V-ATPase-mediated acid secretion. May function as a chloride channel, playing an important role in moderating chloride homeostasis and neuronal activity in the cerebellum. This Bos taurus (Bovine) protein is Sodium-independent sulfate anion transporter.